The chain runs to 491 residues: Ketol-acid reductoisomerase (NADP(+)) (491 aa).

A KARI N-terminal Rossmann domain is found at 15-208 (AQLGKCRFMG…GGHRAGVLES (194 aa)). Residues 45–48 (CGAQ), arginine 68, arginine 76, serine 78, and 108–110 (DKQ) contribute to the NADP(+) site. The active site involves histidine 132. Glycine 158 is a binding site for NADP(+). 2 KARI C-terminal knotted domains span residues 209-344 (SFVA…TAPQ) and 345-484 (YEGK…MTDM). Mg(2+) contacts are provided by aspartate 217, glutamate 221, glutamate 389, and glutamate 393. A substrate-binding site is contributed by serine 414.

Belongs to the ketol-acid reductoisomerase family. Requires Mg(2+) as cofactor.

It catalyses the reaction (2R)-2,3-dihydroxy-3-methylbutanoate + NADP(+) = (2S)-2-acetolactate + NADPH + H(+). The catalysed reaction is (2R,3R)-2,3-dihydroxy-3-methylpentanoate + NADP(+) = (S)-2-ethyl-2-hydroxy-3-oxobutanoate + NADPH + H(+). It participates in amino-acid biosynthesis; L-isoleucine biosynthesis; L-isoleucine from 2-oxobutanoate: step 2/4. Its pathway is amino-acid biosynthesis; L-valine biosynthesis; L-valine from pyruvate: step 2/4. Involved in the biosynthesis of branched-chain amino acids (BCAA). Catalyzes an alkyl-migration followed by a ketol-acid reduction of (S)-2-acetolactate (S2AL) to yield (R)-2,3-dihydroxy-isovalerate. In the isomerase reaction, S2AL is rearranged via a Mg-dependent methyl migration to produce 3-hydroxy-3-methyl-2-ketobutyrate (HMKB). In the reductase reaction, this 2-ketoacid undergoes a metal-dependent reduction by NADPH to yield (R)-2,3-dihydroxy-isovalerate. This chain is Ketol-acid reductoisomerase (NADP(+)), found in Shigella flexneri.